A 29-amino-acid chain; its full sequence is Varv peptide D (29 aa).

The cyclopeptide (Gly-Asn) cross-link spans 1-29 (GLPICGETCVGGSCNTPGCSCSWPVCTRN). 3 disulfides stabilise this stretch: C5–C19, C9–C21, and C14–C26.

This is a cyclic peptide.

Probably participates in a plant defense mechanism. The sequence is that of Varv peptide D from Viola arvensis (European field pansy).